A 498-amino-acid polypeptide reads, in one-letter code: Hexokinase-1 (498 aa).

A helical transmembrane segment spans residues 4-24 (AAVGAAVVCTAAVCAAAAVLV). Residues 35 to 487 (GRVMAILKEL…SGIGAALLAA (453 aa)) enclose the Hexokinase domain. Residues 90–228 (TGDEHGLFYA…GVDMRVTALV (139 aa)) are hexokinase small subdomain. Positions 104, 105, and 106 each coordinate ADP. Positions 194, 195, 229, and 230 each coordinate D-glucose. The interval 229–476 (NDTVGTLAGG…ETIVIEHSND (248 aa)) is hexokinase large subdomain. Threonine 253 provides a ligand contact to ADP. Residues asparagine 256, glutamate 284, and glutamate 315 each contribute to the D-glucose site. Glycine 441 is an ADP binding site.

This sequence belongs to the hexokinase family.

It is found in the plastid. It localises to the chloroplast outer membrane. The enzyme catalyses a D-hexose + ATP = a D-hexose 6-phosphate + ADP + H(+). The catalysed reaction is D-fructose + ATP = D-fructose 6-phosphate + ADP + H(+). It catalyses the reaction D-glucose + ATP = D-glucose 6-phosphate + ADP + H(+). It participates in carbohydrate metabolism; hexose metabolism. It functions in the pathway carbohydrate degradation; glycolysis; D-glyceraldehyde 3-phosphate and glycerone phosphate from D-glucose: step 1/4. Fructose and glucose phosphorylating enzyme. This Spinacia oleracea (Spinach) protein is Hexokinase-1 (HXK1).